Here is a 114-residue protein sequence, read N- to C-terminus: T cell receptor beta variable 10-3 (114 aa).

The N-terminal stretch at 1–21 is a signal peptide; the sequence is MGTRLFFYVALCLLWTGHMDA. Positions 22 to 114 constitute an Ig-like domain; it reads GITQSPRHKV…TSVYFCAISE (93 aa). Residues Cys42 and Cys110 are joined by a disulfide bond.

In terms of assembly, alpha-beta TR is a heterodimer composed of an alpha and beta chain; disulfide-linked. The alpha-beta TR is associated with the transmembrane signaling CD3 coreceptor proteins to form the TR-CD3 (TcR or TCR). The assembly of alpha-beta TR heterodimers with CD3 occurs in the endoplasmic reticulum where a single alpha-beta TR heterodimer associates with one CD3D-CD3E heterodimer, one CD3G-CD3E heterodimer and one CD247 homodimer forming a stable octameric structure. CD3D-CD3E and CD3G-CD3E heterodimers preferentially associate with TR alpha and TR beta chains, respectively. The association of the CD247 homodimer is the last step of TcR assembly in the endoplasmic reticulum and is required for transport to the cell surface.

The protein localises to the cell membrane. Its function is as follows. V region of the variable domain of T cell receptor (TR) beta chain that participates in the antigen recognition. Alpha-beta T cell receptors are antigen specific receptors which are essential to the immune response and are present on the cell surface of T lymphocytes. Recognize peptide-major histocompatibility (MH) (pMH) complexes that are displayed by antigen presenting cells (APC), a prerequisite for efficient T cell adaptive immunity against pathogens. Binding of alpha-beta TR to pMH complex initiates TR-CD3 clustering on the cell surface and intracellular activation of LCK that phosphorylates the ITAM motifs of CD3G, CD3D, CD3E and CD247 enabling the recruitment of ZAP70. In turn ZAP70 phosphorylates LAT, which recruits numerous signaling molecules to form the LAT signalosome. The LAT signalosome propagates signal branching to three major signaling pathways, the calcium, the mitogen-activated protein kinase (MAPK) kinase and the nuclear factor NF-kappa-B (NF-kB) pathways, leading to the mobilization of transcription factors that are critical for gene expression and essential for T cell growth and differentiation. The T cell repertoire is generated in the thymus, by V-(D)-J rearrangement. This repertoire is then shaped by intrathymic selection events to generate a peripheral T cell pool of self-MH restricted, non-autoaggressive T cells. Post-thymic interaction of alpha-beta TR with the pMH complexes shapes TR structural and functional avidity. In Homo sapiens (Human), this protein is T cell receptor beta variable 10-3.